Consider the following 1044-residue polypeptide: Protein ITPRID1 (1044 aa).

Positions 1 to 14 are enriched in polar residues; sequence MMAQKSQGSDNLQE. 4 disordered regions span residues 1–20, 230–251, 388–489, and 583–607; these read MMAQ…EKSK, EEKA…EHRR, MEEV…SSQE, and PEGA…HTQD. Positions 388–398 are enriched in acidic residues; sequence MEEVQSFEEET. Polar residues-rich tracts occupy residues 460 to 469 and 480 to 489; these read HSLVSSQDCQ and RASMSFSSQE. Positions 896-937 form a coiled coil; it reads SRDMSEEEREEAEQLQTLREALRQQVAELEFQLGDRAQQIRE.

The sequence is that of Protein ITPRID1 from Homo sapiens (Human).